The sequence spans 288 residues: Cyclin-dependent kinase 2 homolog (288 aa).

One can recognise a Protein kinase domain in the interval 4-284 (YHGLEKIGEG…AKQALEHAYF (281 aa)). Residues 10 to 18 (IGEGTYGVV) and Lys-32 contribute to the ATP site. Thr-14 carries the post-translational modification Phosphothreonine. Tyr-15 is subject to Phosphotyrosine. Asp-125 (proton acceptor) is an active-site residue. Phosphothreonine is present on Thr-158.

This sequence belongs to the protein kinase superfamily. CMGC Ser/Thr protein kinase family. CDC2/CDKX subfamily. In terms of assembly, may form a complex composed of at least the catalytic subunit CRK2 and a cyclin. Requires Mg(2+) as cofactor. Post-translationally, autophosphorylates in presence of cyclin cyc-1 but not in presence of cyclin cyc-3.

It is found in the cytoplasm. The catalysed reaction is L-seryl-[protein] + ATP = O-phospho-L-seryl-[protein] + ADP + H(+). It carries out the reaction L-threonyl-[protein] + ATP = O-phospho-L-threonyl-[protein] + ADP + H(+). It catalyses the reaction [DNA-directed RNA polymerase] + ATP = phospho-[DNA-directed RNA polymerase] + ADP + H(+). Phosphorylation at Thr-14 or Tyr-15 inactivates the enzyme, while phosphorylation at Thr-158 activates it. Activated by cyclin cyc-1 in vitro. Activated by cyclin cyc-3 in vitro. Functionally, serine/threonine-protein kinase. Involved in the control of the cell cycle. Required for entry into S-phase and mitosis. Probable component of the kinase complex that phosphorylates the repetitive C-terminus of RNA polymerase II. In schizonts, phosphorylates ORC1 resulting in its dissociation from DNA, relocalization to the cytoplasm and likely its degradation. This chain is Cyclin-dependent kinase 2 homolog, found in Plasmodium falciparum (isolate 3D7).